Consider the following 456-residue polypeptide: UPF0496 protein 4 (456 aa).

Residues 205–221 form a helical membrane-spanning segment; sequence SVTVFVCSIFVAVLSGS.

It belongs to the ROH1 family.

It localises to the membrane. The sequence is that of UPF0496 protein 4 from Oryza sativa subsp. indica (Rice).